The following is a 299-amino-acid chain: Bifunctional protein FolD (299 aa).

Residues 168 to 170 (GRS), serine 193, and isoleucine 234 contribute to the NADP(+) site.

The protein belongs to the tetrahydrofolate dehydrogenase/cyclohydrolase family. As to quaternary structure, homodimer.

The enzyme catalyses (6R)-5,10-methylene-5,6,7,8-tetrahydrofolate + NADP(+) = (6R)-5,10-methenyltetrahydrofolate + NADPH. It carries out the reaction (6R)-5,10-methenyltetrahydrofolate + H2O = (6R)-10-formyltetrahydrofolate + H(+). Its pathway is one-carbon metabolism; tetrahydrofolate interconversion. Catalyzes the oxidation of 5,10-methylenetetrahydrofolate to 5,10-methenyltetrahydrofolate and then the hydrolysis of 5,10-methenyltetrahydrofolate to 10-formyltetrahydrofolate. In Bartonella henselae (strain ATCC 49882 / DSM 28221 / CCUG 30454 / Houston 1) (Rochalimaea henselae), this protein is Bifunctional protein FolD.